The chain runs to 211 residues: Protein-L-isoaspartate O-methyltransferase (211 aa).

S62 is a catalytic residue.

It belongs to the methyltransferase superfamily. L-isoaspartyl/D-aspartyl protein methyltransferase family.

The protein resides in the cytoplasm. It catalyses the reaction [protein]-L-isoaspartate + S-adenosyl-L-methionine = [protein]-L-isoaspartate alpha-methyl ester + S-adenosyl-L-homocysteine. In terms of biological role, catalyzes the methyl esterification of L-isoaspartyl residues in peptides and proteins that result from spontaneous decomposition of normal L-aspartyl and L-asparaginyl residues. It plays a role in the repair and/or degradation of damaged proteins. The protein is Protein-L-isoaspartate O-methyltransferase of Shewanella frigidimarina (strain NCIMB 400).